Here is a 104-residue protein sequence, read N- to C-terminus: Class I hydrophobin 4 (104 aa).

The signal sequence occupies residues M1–A16. 4 cysteine pairs are disulfide-bonded: C26–C85, C34–C79, C35–C61, and C86–C99.

It belongs to the fungal hydrophobin family. In terms of assembly, self-assembles to form functional amyloid fibrils called rodlets. Self-assembly into fibrillar rodlets occurs spontaneously at hydrophobic:hydrophilic interfaces and the rodlets further associate laterally to form amphipathic monolayers.

It localises to the secreted. The protein resides in the cell wall. Functionally, aerial growth, conidiation, and dispersal of filamentous fungi in the environment rely upon a capability of their secreting small amphipathic proteins called hydrophobins (HPBs) with low sequence identity. Class I can self-assemble into an outermost layer of rodlet bundles on aerial cell surfaces, conferring cellular hydrophobicity that supports fungal growth, development and dispersal; whereas Class II form highly ordered films at water-air interfaces through intermolecular interactions but contribute nothing to the rodlet structure. HYD4 is a class I hydrophobin that negatively regulates aerial mycelial growth, conidiation, carotenoid and adenosine synthesis, resistance to oxidant stress, and fruiting body development. Seems not to be involved in the mycelial growth rate, the hydrophobicity of the mycelia and conidia, nor the conidial virulence on silkworm pupae. The sequence is that of Class I hydrophobin 4 from Cordyceps militaris (Caterpillar fungus).